Consider the following 297-residue polypeptide: Acetaldehyde dehydrogenase (297 aa).

An NAD(+)-binding site is contributed by 15–18 (SGSI). Cysteine 130 serves as the catalytic Acyl-thioester intermediate. NAD(+) is bound by residues 162-170 (SAGIATREN) and asparagine 272.

It belongs to the acetaldehyde dehydrogenase family.

The catalysed reaction is acetaldehyde + NAD(+) + CoA = acetyl-CoA + NADH + H(+). The chain is Acetaldehyde dehydrogenase from Burkholderia pseudomallei (strain 1106a).